The primary structure comprises 656 residues: UvrABC system protein B (656 aa).

Residues 23-180 (EGIKKGYRFQ…QHLAKIGYER (158 aa)) enclose the Helicase ATP-binding domain. 36 to 43 (GVTGSGKT) contributes to the ATP binding site. The Beta-hairpin motif lies at 89–112 (YYDYYQPEAYVPTKDLYIEKNADI). A Helicase C-terminal domain is found at 426–588 (QVDDLISEIK…ITPKTIVKPL (163 aa)). The region spanning 614–649 (EEYLSLLEEEMYRAASELRYEDAAKLRDEIFRLREE) is the UVR domain.

Belongs to the UvrB family. As to quaternary structure, forms a heterotetramer with UvrA during the search for lesions. Interacts with UvrC in an incision complex.

The protein resides in the cytoplasm. Functionally, the UvrABC repair system catalyzes the recognition and processing of DNA lesions. A damage recognition complex composed of 2 UvrA and 2 UvrB subunits scans DNA for abnormalities. Upon binding of the UvrA(2)B(2) complex to a putative damaged site, the DNA wraps around one UvrB monomer. DNA wrap is dependent on ATP binding by UvrB and probably causes local melting of the DNA helix, facilitating insertion of UvrB beta-hairpin between the DNA strands. Then UvrB probes one DNA strand for the presence of a lesion. If a lesion is found the UvrA subunits dissociate and the UvrB-DNA preincision complex is formed. This complex is subsequently bound by UvrC and the second UvrB is released. If no lesion is found, the DNA wraps around the other UvrB subunit that will check the other stand for damage. This chain is UvrABC system protein B, found in Pseudothermotoga lettingae (strain ATCC BAA-301 / DSM 14385 / NBRC 107922 / TMO) (Thermotoga lettingae).